We begin with the raw amino-acid sequence, 111 residues long: Transcription initiation factor IIA subunit 2 (111 aa).

This sequence belongs to the TFIIA subunit 2 family. TFIIA is a heterodimer of the large unprocessed subunit 1 and a small subunit gamma. It was originally believed to be a heterotrimer of an alpha, a beta and a gamma subunit. Interacts with NCOA6 general coactivator. TFIIA forms a complex with TBP.

It localises to the nucleus. Its function is as follows. TFIIA is a component of the transcription machinery of RNA polymerase II and plays an important role in transcriptional activation. TFIIA in a complex with TBP mediates transcriptional activity. This is Transcription initiation factor IIA subunit 2 (gtf2a2) from Paralichthys olivaceus (Bastard halibut).